The chain runs to 80 residues: Adipogenin (80 aa).

Residues 16–36 traverse the membrane as a helical segment; that stretch reads FLVFWLCLPVALLLFLTIVWL. The residue at position 63 (serine 63) is a Phosphoserine.

It belongs to the adipogenin family. As to expression, selectively expressed in adipose tissue where it is particularly enriched in brown adipose tissue. In adipose tissue, expressed exclusively in adipocytes and not in the stromal-vascular cell population. Expressed at much lower levels in heart, stomach and muscle and barely detected in kidney and lung.

It is found in the membrane. It localises to the nucleus. In terms of biological role, plays a role in stimulating adipocyte differentiation and development. The sequence is that of Adipogenin (Adig) from Mus musculus (Mouse).